We begin with the raw amino-acid sequence, 337 residues long: Cobalt-precorrin-5B C(1)-methyltransferase (337 aa).

It belongs to the CbiD family.

It catalyses the reaction Co-precorrin-5B + S-adenosyl-L-methionine = Co-precorrin-6A + S-adenosyl-L-homocysteine. It functions in the pathway cofactor biosynthesis; adenosylcobalamin biosynthesis; cob(II)yrinate a,c-diamide from sirohydrochlorin (anaerobic route): step 6/10. In terms of biological role, catalyzes the methylation of C-1 in cobalt-precorrin-5B to form cobalt-precorrin-6A. This chain is Cobalt-precorrin-5B C(1)-methyltransferase, found in Methanoculleus marisnigri (strain ATCC 35101 / DSM 1498 / JR1).